The sequence spans 710 residues: Fatty acid oxidation complex subunit alpha (710 aa).

The interval 1–190 (MSMEKTFNLA…KMGLVNDVVP (190 aa)) is enoyl-CoA hydratase. The 3-hydroxyacyl-CoA dehydrogenase stretch occupies residues 310–710 (RKVKKVMVLG…ASDGSQFYKK (401 aa)).

This sequence in the N-terminal section; belongs to the enoyl-CoA hydratase/isomerase family. It in the central section; belongs to the 3-hydroxyacyl-CoA dehydrogenase family. Heterotetramer of two alpha chains (FadJ) and two beta chains (FadI).

The protein resides in the cytoplasm. The enzyme catalyses a (3S)-3-hydroxyacyl-CoA = a (2E)-enoyl-CoA + H2O. It catalyses the reaction a 4-saturated-(3S)-3-hydroxyacyl-CoA = a (3E)-enoyl-CoA + H2O. It carries out the reaction a (3S)-3-hydroxyacyl-CoA + NAD(+) = a 3-oxoacyl-CoA + NADH + H(+). The catalysed reaction is (3S)-3-hydroxybutanoyl-CoA = (3R)-3-hydroxybutanoyl-CoA. Its pathway is lipid metabolism; fatty acid beta-oxidation. Its function is as follows. Catalyzes the formation of a hydroxyacyl-CoA by addition of water on enoyl-CoA. Also exhibits 3-hydroxyacyl-CoA epimerase and 3-hydroxyacyl-CoA dehydrogenase activities. This chain is Fatty acid oxidation complex subunit alpha, found in Shewanella frigidimarina (strain NCIMB 400).